A 192-amino-acid chain; its full sequence is Protein hunchback (192 aa).

2 disordered regions span residues 16 to 54 and 152 to 192; these read SHHH…SNTN and LTPP…KYMA. A compositionally biased stretch (basic residues) spans 17–28; sequence HHHHHHHAHHSH. Residues 32 to 41 show a composition bias toward low complexity; it reads SNSNASSPHQ. Residues 173–192 are compositionally biased toward basic and acidic residues; sequence EPEKEHDLMSNSSEDMKYMA.

This sequence belongs to the hunchback C2H2-type zinc-finger protein family.

Its subcellular location is the nucleus. Gap class segmentation protein that controls development of head structures. The chain is Protein hunchback (hb) from Drosophila tanythrix (Fruit fly).